Reading from the N-terminus, the 348-residue chain is Dihydroorotase (348 aa).

Zn(2+) contacts are provided by His17 and His19. Substrate contacts are provided by residues 19 to 21 and Asn45; that span reads HLR. Residues Lys103, His140, and His178 each contribute to the Zn(2+) site. Lys103 is modified (N6-carboxylysine). His140 is a substrate binding site. Leu223 serves as a coordination point for substrate. Asp251 is a binding site for Zn(2+). Asp251 is a catalytic residue. Substrate is bound by residues His255 and Ala267.

This sequence belongs to the metallo-dependent hydrolases superfamily. DHOase family. Class II DHOase subfamily. As to quaternary structure, homodimer. Zn(2+) is required as a cofactor.

It carries out the reaction (S)-dihydroorotate + H2O = N-carbamoyl-L-aspartate + H(+). Its pathway is pyrimidine metabolism; UMP biosynthesis via de novo pathway; (S)-dihydroorotate from bicarbonate: step 3/3. In terms of biological role, catalyzes the reversible cyclization of carbamoyl aspartate to dihydroorotate. This is Dihydroorotase from Escherichia coli O17:K52:H18 (strain UMN026 / ExPEC).